We begin with the raw amino-acid sequence, 111 residues long: Large ribosomal subunit protein uL24 (111 aa).

This sequence belongs to the universal ribosomal protein uL24 family. As to quaternary structure, part of the 50S ribosomal subunit.

In terms of biological role, one of two assembly initiator proteins, it binds directly to the 5'-end of the 23S rRNA, where it nucleates assembly of the 50S subunit. One of the proteins that surrounds the polypeptide exit tunnel on the outside of the subunit. The polypeptide is Large ribosomal subunit protein uL24 (Chlamydia trachomatis serovar A (strain ATCC VR-571B / DSM 19440 / HAR-13)).